The sequence spans 109 residues: UPF0449 protein C19orf25 homolog (109 aa).

Tyr-63 carries the post-translational modification Phosphotyrosine.

Belongs to the UPF0449 family.

The polypeptide is UPF0449 protein C19orf25 homolog (Rattus norvegicus (Rat)).